A 491-amino-acid polypeptide reads, in one-letter code: MANYFNTLNLRQQLAQLGKCRFMGRDEFADGASYLQGKKVVIVGCGAQGLNQGLNMRDSGLDISYALRKEAIAEKRASWRKATENGFKVGTYEELIPQADLVVNLTPDKQHSDVVHTVQPLMKDGAALGYSHGFNIVEVGEQIRKDITVVMVAPKCPGTEVREEYKRGFGVPTLIAVHPENDPKGEGMAIAKAWAAATGGHRAGVLESSFVAEVKSDLMGEQTILCGMLQAGSLLCFDKLVEEGTDPAYAEKLIQFGWETITEALKQGGITLMMDRLSNPAKLRAYALSEQLKEIMAPLFQKHMDDIISGEFSSGMMADWANDDKKLLTWREETGKTAFETAPQYEGKIGEQEYFDKGVLMIAMVKAGVELAFETMVDSGIIEESAYYESLHELPLIANTIARKRLYEMNVVISDTAEYGNYLFSYACVPLLKPFMAELQPGDLGKAIPEGAVDNAQLRDLNEAIRSHAIEQVGKKLRGYMTDMKRIAVAG.

A KARI N-terminal Rossmann domain is found at 15-208; sequence AQLGKCRFMG…GGHRAGVLES (194 aa). Residues 45–48, arginine 68, arginine 76, serine 78, and 108–110 contribute to the NADP(+) site; these read CGAQ and DKQ. Histidine 132 is a catalytic residue. Glycine 158 contributes to the NADP(+) binding site. 2 consecutive KARI C-terminal knotted domains span residues 209–344 and 345–484; these read SFVA…TAPQ and YEGK…MTDM. Mg(2+)-binding residues include aspartate 217, glutamate 221, glutamate 389, and glutamate 393. Residue serine 414 participates in substrate binding.

Belongs to the ketol-acid reductoisomerase family. It depends on Mg(2+) as a cofactor.

It carries out the reaction (2R)-2,3-dihydroxy-3-methylbutanoate + NADP(+) = (2S)-2-acetolactate + NADPH + H(+). The enzyme catalyses (2R,3R)-2,3-dihydroxy-3-methylpentanoate + NADP(+) = (S)-2-ethyl-2-hydroxy-3-oxobutanoate + NADPH + H(+). The protein operates within amino-acid biosynthesis; L-isoleucine biosynthesis; L-isoleucine from 2-oxobutanoate: step 2/4. It functions in the pathway amino-acid biosynthesis; L-valine biosynthesis; L-valine from pyruvate: step 2/4. In terms of biological role, involved in the biosynthesis of branched-chain amino acids (BCAA). Catalyzes an alkyl-migration followed by a ketol-acid reduction of (S)-2-acetolactate (S2AL) to yield (R)-2,3-dihydroxy-isovalerate. In the isomerase reaction, S2AL is rearranged via a Mg-dependent methyl migration to produce 3-hydroxy-3-methyl-2-ketobutyrate (HMKB). In the reductase reaction, this 2-ketoacid undergoes a metal-dependent reduction by NADPH to yield (R)-2,3-dihydroxy-isovalerate. The polypeptide is Ketol-acid reductoisomerase (NADP(+)) (Escherichia coli O157:H7).